Here is an 84-residue protein sequence, read N- to C-terminus: Cell division topological specificity factor (84 aa).

It belongs to the MinE family.

Its function is as follows. Prevents the cell division inhibition by proteins MinC and MinD at internal division sites while permitting inhibition at polar sites. This ensures cell division at the proper site by restricting the formation of a division septum at the midpoint of the long axis of the cell. The protein is Cell division topological specificity factor of Pseudomonas fluorescens (strain ATCC BAA-477 / NRRL B-23932 / Pf-5).